Reading from the N-terminus, the 187-residue chain is Ribosome maturation factor RimM (187 aa).

Residues 111–187 enclose the PRC barrel domain; the sequence is KDEYYWVDLI…RILVDWQADF (77 aa).

Belongs to the RimM family. In terms of assembly, binds ribosomal protein uS19.

Its subcellular location is the cytoplasm. An accessory protein needed during the final step in the assembly of 30S ribosomal subunit, possibly for assembly of the head region. Essential for efficient processing of 16S rRNA. May be needed both before and after RbfA during the maturation of 16S rRNA. It has affinity for free ribosomal 30S subunits but not for 70S ribosomes. The polypeptide is Ribosome maturation factor RimM (Albidiferax ferrireducens (strain ATCC BAA-621 / DSM 15236 / T118) (Rhodoferax ferrireducens)).